The following is a 442-amino-acid chain: F-box only protein 39 (442 aa).

The 46-residue stretch at Trp-16–Ile-61 folds into the F-box domain.

As to quaternary structure, directly interacts with SKP1 and CUL1.

In terms of biological role, substrate-recognition component of the SCF (SKP1-CUL1-F-box protein)-type E3 ubiquitin ligase complex. This is F-box only protein 39 (FBXO39) from Homo sapiens (Human).